An 802-amino-acid chain; its full sequence is Potassium channel AKT2/3 (802 aa).

The Cytoplasmic portion of the chain corresponds to 1 to 79 (MDLKYSASHC…PMDSRYRCWE (79 aa)). Residues 80-100 (FYMVLLVAYSAWVYPFEVAFL) traverse the membrane as a helical segment. At 101–109 (NSSPKRNLC) the chain is on the extracellular side. The chain crosses the membrane as a helical span at residues 110 to 130 (IADNIVDLFFAVDIVLTFFVA). The Cytoplasmic segment spans residues 131-153 (YIDERTQLLVREPKQIAVRYLST). The helical transmembrane segment at 154–174 (WFLMDVASTIPFDAIGYLITG) threads the bilayer. Topologically, residues 175 to 183 (TSTLNITCN) are extracellular. Residue Asn-179 is glycosylated (N-linked (GlcNAc...) asparagine). The helical; Voltage-sensor transmembrane segment at 184–204 (LLGLLRFWRLRRVKHLFTRLE) threads the bilayer. Residues 205–218 (KDIRYSYFWIRCFR) are Cytoplasmic-facing. The chain crosses the membrane as a helical span at residues 219–239 (LLSVTLFLVHCAGCSYYLIAD). Residues 240-265 (RYPHQGKTWTDAIPNFTETSLSIRYI) lie on the Extracellular side of the membrane. Asn-254 carries an N-linked (GlcNAc...) asparagine glycan. Positions 266–285 (AAIYWSITTMTTVGYGDLHA) form an intramembrane region, pore-forming. The Extracellular portion of the chain corresponds to 286–288 (SNT). Residues 289–309 (IEMVFITVYMLFNLGLTAYLI) traverse the membrane as a helical segment. Topologically, residues 310 to 802 (GNMTNLVVEG…KLYFVVNKII (493 aa)) are cytoplasmic. 394–513 (LFKGVSREIL…ATMLKNFLQH (120 aa)) contributes to the a nucleoside 3',5'-cyclic phosphate binding site. ANK repeat units lie at residues 540 to 569 (NIAS…SPDI), 573 to 602 (KGKT…NIHI), 606 to 636 (NGNS…SDPH), 637 to 666 (IAGD…NVDT), and 670 to 699 (HGVT…DVVC). The KHA domain maps to 725 to 802 (RVSIYRGHPL…KLYFVVNKII (78 aa)).

It belongs to the potassium channel family. Plant (TC 1.A.1.4) subfamily. In terms of assembly, the potassium channel is probably composed of a homo- or heterotetrameric complex of pore-forming subunits. Interacts with the phosphatase PPC2A and the kinase CIPK6. May interact with AKT1, KAT1 and KAT3. Interacts with SLAC1. Post-translationally, dephosphorylated by PP2CA. In terms of tissue distribution, expressed mainly in the phloem tissues throughout the plant but also, at a lower level, in leaf epiderm, mesophyll and guard cells.

The protein localises to the endoplasmic reticulum membrane. In terms of biological role, highly selective and weak inward-rectifying potassium channel. Plays a role in both loading and unloading potassium into/from the phloem sap. Seems to control sugar loading into phloem via a voltage-dependent process. Blocked by physiological concentrations of external calcium and by external acidification. May interact with the cytoskeleton or with regulatory proteins. Dephosphorylation by PP2CA not only leads to the inhibition of potassium currents but also to an increase of the voltage-dependence of the channel. Regulated by the CBL4/CIPK6 calcium sensor/protein kinase complex via a kinase interaction-dependent but phosphorylation-independent translocation of the channel to the plasma membrane. The protein is Potassium channel AKT2/3 (AKT2) of Arabidopsis thaliana (Mouse-ear cress).